We begin with the raw amino-acid sequence, 1098 residues long: uncharacterized protein (1098 aa).

This is an uncharacterized protein from Invertebrate iridescent virus 3 (IIV-3).